The sequence spans 322 residues: tRNA dimethylallyltransferase (322 aa).

Residue 19–26 (GPTASGKT) participates in ATP binding. 21-26 (TASGKT) is a binding site for substrate. Interaction with substrate tRNA regions lie at residues 44 to 47 (DSAL), 168 to 172 (QRIQR), and 255 to 260 (RCVGYR).

This sequence belongs to the IPP transferase family. As to quaternary structure, monomer. Requires Mg(2+) as cofactor.

It carries out the reaction adenosine(37) in tRNA + dimethylallyl diphosphate = N(6)-dimethylallyladenosine(37) in tRNA + diphosphate. Its function is as follows. Catalyzes the transfer of a dimethylallyl group onto the adenine at position 37 in tRNAs that read codons beginning with uridine, leading to the formation of N6-(dimethylallyl)adenosine (i(6)A). This chain is tRNA dimethylallyltransferase, found in Cupriavidus taiwanensis (strain DSM 17343 / BCRC 17206 / CCUG 44338 / CIP 107171 / LMG 19424 / R1) (Ralstonia taiwanensis (strain LMG 19424)).